A 461-amino-acid chain; its full sequence is Hydroxyproline dehydrogenase (461 aa).

An N6-acetyllysine modification is found at K310.

This sequence belongs to the proline oxidase family. FAD is required as a cofactor.

It catalyses the reaction trans-4-hydroxy-L-proline + a quinone = (3R,5S)-1-pyrroline-3-hydroxy-5-carboxylate + a quinol + H(+). The enzyme catalyses L-proline + a quinone = (S)-1-pyrroline-5-carboxylate + a quinol + H(+). Its pathway is amino-acid degradation; L-proline degradation into L-glutamate; L-glutamate from L-proline: step 1/2. Dehydrogenase that converts trans-4-L-hydroxyproline to delta-1-pyrroline-3-hydroxy-5-carboxylate (Hyp) using ubiquinone-10 as the terminal electron acceptor. Can also use proline as a substrate but with a very much lower efficiency. Does not react with other diastereomers of Hyp: trans-4-D-hydroxyproline and cis-4-L-hydroxyproline. Ubiquininone analogs such as menadione, duroquinone and ubiquinone-1 react more efficiently than oxygen as the terminal electron acceptor during catalysis. The polypeptide is Hydroxyproline dehydrogenase (Bos taurus (Bovine)).